Reading from the N-terminus, the 103-residue chain is Large ribosomal subunit protein bL21 (103 aa).

Belongs to the bacterial ribosomal protein bL21 family. Part of the 50S ribosomal subunit. Contacts protein L20.

Functionally, this protein binds to 23S rRNA in the presence of protein L20. This is Large ribosomal subunit protein bL21 from Alkaliphilus oremlandii (strain OhILAs) (Clostridium oremlandii (strain OhILAs)).